We begin with the raw amino-acid sequence, 114 residues long: Protein S100-A9 (114 aa).

Threonine 2 carries the blocked amino end (Thr) modification. Cysteine 3 carries the S-nitrosocysteine; transient modification. 2 EF-hand domains span residues 12 to 47 (IETIINTFHQYSVKLGHPDTLNQGEFKELVRKDLQN) and 54 to 89 (KNEKVIEHIMEDLDTNADKQLSFEEFIMLMARLTWA). Histidine 20 serves as a coordination point for Zn(2+). Ca(2+)-binding residues include serine 23, leucine 26, and histidine 28. Residue aspartate 30 coordinates Zn(2+). Positions 31, 36, 67, 69, 71, 73, and 78 each coordinate Ca(2+). Zn(2+)-binding residues include histidine 91 and histidine 95. Residues 93 to 102 (KMHEGDEGPG) are compositionally biased toward basic and acidic residues. The interval 93–114 (KMHEGDEGPGHHHKPGLGEGTP) is disordered. The residue at position 105 (histidine 105) is a Pros-methylhistidine. Phosphothreonine; by MAPK14 is present on threonine 113.

In terms of assembly, homodimer. Preferentially exists as a heterodimer or heterotetramer with S100A8 known as calprotectin (S100A8/A9). S100A9 interacts with ATP2A2. S100A9 interacts with AGER, and with the heterodimeric complex formed by TLR4 and LY96 in the presence of calcium and/or zinc ions. S100A9 binds quinoline-3-carboxamides in the presence of calcium and/or zinc ions. S100A9 interacts with amyloid-beta protein 40. Calprotectin (S100A8/9) interacts with CEACAM3 and tubulin filaments in a calcium-dependent manner. Heterotetrameric calprotectin (S100A8/A9) interacts with ANXA6 and associates with tubulin filaments in activated monocytes. Calprotectin (S100A8/9) interacts with NCF2/P67PHOX, RAC1, RAC2, CYBA and CYBB. Calprotectin (S100A8/9) interacts with NOS2 to form the iNOS-S100A8/A9 transnitrosylase complex; induced by LDL(ox). Calprotectin (S100A8/9) interacts with CD69. Post-translationally, phosphorylated. Phosphorylation inhibits activation of tubulin polymerization. S-nitrosylation of Cys-3 is implicated in LDL(ox)-induced S-nitrosylation of GAPDH at 'Cys-247' through a transnitrosylase mechanism involving a iNOS-S100A8/9 complex. In terms of processing, methylation at His-105 by METTL9 reduces zinc-binding without affecting heterodimerization with S100A8. In terms of tissue distribution, calprotectin (S100A8/9) is predominantly expressed in myeloid cells. Except for inflammatory conditions, the expression is restricted to a specific stage of myeloid differentiation since both proteins are expressed in circulating neutrophils and monocytes but are absent in normal tissue macrophages and lymphocytes. Under chronic inflammatory conditions, such as psoriasis and malignant disorders, also expressed in the epidermis. Found in high concentrations at local sites of inflammation or in the serum of patients with inflammatory diseases such as rheumatoid, cystic fibrosis, inflammatory bowel disease, Crohn's disease, giant cell arteritis, cystic fibrosis, Sjogren's syndrome, systemic lupus erythematosus, and progressive systemic sclerosis. Involved in the formation and deposition of amyloids in the aging prostate known as corpora amylacea inclusions. Strongly up-regulated in many tumors, including gastric, esophageal, colon, pancreatic, bladder, ovarian, thyroid, breast and skin cancers.

It is found in the secreted. The protein resides in the cytoplasm. It localises to the cytoskeleton. The protein localises to the cell membrane. In terms of biological role, S100A9 is a calcium- and zinc-binding protein which plays a prominent role in the regulation of inflammatory processes and immune response. It can induce neutrophil chemotaxis, adhesion, can increase the bactericidal activity of neutrophils by promoting phagocytosis via activation of SYK, PI3K/AKT, and ERK1/2 and can induce degranulation of neutrophils by a MAPK-dependent mechanism. Predominantly found as calprotectin (S100A8/A9) which has a wide plethora of intra- and extracellular functions. The intracellular functions include: facilitating leukocyte arachidonic acid trafficking and metabolism, modulation of the tubulin-dependent cytoskeleton during migration of phagocytes and activation of the neutrophilic NADPH-oxidase. Also participates in regulatory T-cell differentiation together with CD69. Activates NADPH-oxidase by facilitating the enzyme complex assembly at the cell membrane, transferring arachidonic acid, an essential cofactor, to the enzyme complex and S100A8 contributes to the enzyme assembly by directly binding to NCF2/P67PHOX. The extracellular functions involve pro-inflammatory, antimicrobial, oxidant-scavenging and apoptosis-inducing activities. Its pro-inflammatory activity includes recruitment of leukocytes, promotion of cytokine and chemokine production, and regulation of leukocyte adhesion and migration. Acts as an alarmin or a danger associated molecular pattern (DAMP) molecule and stimulates innate immune cells via binding to pattern recognition receptors such as Toll-like receptor 4 (TLR4) and receptor for advanced glycation endproducts (AGER). Binding to TLR4 and AGER activates the MAP-kinase and NF-kappa-B signaling pathways resulting in the amplification of the pro-inflammatory cascade. Has antimicrobial activity towards bacteria and fungi and exerts its antimicrobial activity probably via chelation of Zn(2+) which is essential for microbial growth. Can induce cell death via autophagy and apoptosis and this occurs through the cross-talk of mitochondria and lysosomes via reactive oxygen species (ROS) and the process involves BNIP3. Can regulate neutrophil number and apoptosis by an anti-apoptotic effect; regulates cell survival via ITGAM/ITGB and TLR4 and a signaling mechanism involving MEK-ERK. Its role as an oxidant scavenger has a protective role in preventing exaggerated tissue damage by scavenging oxidants. Can act as a potent amplifier of inflammation in autoimmunity as well as in cancer development and tumor spread. Has transnitrosylase activity; in oxidatively-modified low-densitity lipoprotein (LDL(ox))-induced S-nitrosylation of GAPDH on 'Cys-247' proposed to transfer the NO moiety from NOS2/iNOS to GAPDH via its own S-nitrosylated Cys-3. The iNOS-S100A8/A9 transnitrosylase complex is proposed to also direct selective inflammatory stimulus-dependent S-nitrosylation of multiple targets such as ANXA5, EZR, MSN and VIM by recognizing a [IL]-x-C-x-x-[DE] motif. This chain is Protein S100-A9, found in Homo sapiens (Human).